The primary structure comprises 186 residues: Elongation factor P (186 aa).

The residue at position 33 (Lys33) is an N6-(3,6-diaminohexanoyl)-5-hydroxylysine.

Belongs to the elongation factor P family. Post-translationally, may be beta-lysylated on the epsilon-amino group of Lys-33 by the combined action of EpmA and EpmB, and then hydroxylated on the C5 position of the same residue by EpmC (if this protein is present). Lysylation is critical for the stimulatory effect of EF-P on peptide-bond formation. The lysylation moiety may extend toward the peptidyltransferase center and stabilize the terminal 3-CCA end of the tRNA. Hydroxylation of the C5 position on Lys-33 may allow additional potential stabilizing hydrogen-bond interactions with the P-tRNA.

Its subcellular location is the cytoplasm. The protein operates within protein biosynthesis; polypeptide chain elongation. Involved in peptide bond synthesis. Alleviates ribosome stalling that occurs when 3 or more consecutive Pro residues or the sequence PPG is present in a protein, possibly by augmenting the peptidyl transferase activity of the ribosome. Modification of Lys-33 is required for alleviation. This chain is Elongation factor P, found in Acidithiobacillus ferrooxidans (strain ATCC 23270 / DSM 14882 / CIP 104768 / NCIMB 8455) (Ferrobacillus ferrooxidans (strain ATCC 23270)).